A 383-amino-acid chain; its full sequence is Succinyl-diaminopimelate desuccinylase (383 aa).

Zn(2+) is bound at residue H68. Residue D70 is part of the active site. A Zn(2+)-binding site is contributed by D100. E130 serves as the catalytic Proton acceptor. Positions 131, 159, and 352 each coordinate Zn(2+).

It belongs to the peptidase M20A family. DapE subfamily. As to quaternary structure, homodimer. Zn(2+) serves as cofactor. The cofactor is Co(2+).

It carries out the reaction N-succinyl-(2S,6S)-2,6-diaminopimelate + H2O = (2S,6S)-2,6-diaminopimelate + succinate. The protein operates within amino-acid biosynthesis; L-lysine biosynthesis via DAP pathway; LL-2,6-diaminopimelate from (S)-tetrahydrodipicolinate (succinylase route): step 3/3. Catalyzes the hydrolysis of N-succinyl-L,L-diaminopimelic acid (SDAP), forming succinate and LL-2,6-diaminopimelate (DAP), an intermediate involved in the bacterial biosynthesis of lysine and meso-diaminopimelic acid, an essential component of bacterial cell walls. This is Succinyl-diaminopimelate desuccinylase from Granulibacter bethesdensis (strain ATCC BAA-1260 / CGDNIH1).